A 395-amino-acid chain; its full sequence is NADH-quinone oxidoreductase subunit D (395 aa).

It belongs to the complex I 49 kDa subunit family. In terms of assembly, NDH-1 is composed of 14 different subunits. Subunits NuoB, C, D, E, F, and G constitute the peripheral sector of the complex.

The protein localises to the cell inner membrane. It carries out the reaction a quinone + NADH + 5 H(+)(in) = a quinol + NAD(+) + 4 H(+)(out). Functionally, NDH-1 shuttles electrons from NADH, via FMN and iron-sulfur (Fe-S) centers, to quinones in the respiratory chain. The immediate electron acceptor for the enzyme in this species is believed to be a menaquinone. Couples the redox reaction to proton translocation (for every two electrons transferred, four hydrogen ions are translocated across the cytoplasmic membrane), and thus conserves the redox energy in a proton gradient. The sequence is that of NADH-quinone oxidoreductase subunit D from Chlorobium luteolum (strain DSM 273 / BCRC 81028 / 2530) (Pelodictyon luteolum).